The chain runs to 37 residues: Large ribosomal subunit protein bL36 (37 aa).

Belongs to the bacterial ribosomal protein bL36 family.

This Sulfurovum sp. (strain NBC37-1) protein is Large ribosomal subunit protein bL36.